Reading from the N-terminus, the 638-residue chain is uncharacterized protein (638 aa).

The CID domain maps to 1–138; sequence MDLVELDYLS…KIENALLKYK (138 aa). 2 disordered regions span residues 318 to 338 and 615 to 638; these read QPPL…YSLS and LGKR…QESK.

This is an uncharacterized protein from Schizosaccharomyces pombe (strain 972 / ATCC 24843) (Fission yeast).